The chain runs to 225 residues: 2-C-methyl-D-erythritol 4-phosphate cytidylyltransferase (225 aa).

The protein belongs to the IspD/TarI cytidylyltransferase family. IspD subfamily.

The catalysed reaction is 2-C-methyl-D-erythritol 4-phosphate + CTP + H(+) = 4-CDP-2-C-methyl-D-erythritol + diphosphate. It participates in isoprenoid biosynthesis; isopentenyl diphosphate biosynthesis via DXP pathway; isopentenyl diphosphate from 1-deoxy-D-xylulose 5-phosphate: step 2/6. Catalyzes the formation of 4-diphosphocytidyl-2-C-methyl-D-erythritol from CTP and 2-C-methyl-D-erythritol 4-phosphate (MEP). This Haemophilus influenzae (strain PittEE) protein is 2-C-methyl-D-erythritol 4-phosphate cytidylyltransferase.